A 226-amino-acid polypeptide reads, in one-letter code: Lysoplasmalogenase TMEM86B (226 aa).

Over 1–23 (MDARKEGLPLETLFSDQYPQVRR) the chain is Cytoplasmic. A helical membrane pass occupies residues 24 to 40 (WLAPFILACSLYFLLWI). The Extracellular segment spans residues 41–46 (PVDQPS). A helical transmembrane segment spans residues 47 to 68 (WVSALIKCQPILCLVVFLWAVA). Residues 69–74 (PGGSST) are Cytoplasmic-facing. The chain crosses the membrane as a helical span at residues 75-93 (WLLQGALVCSAVGDACLIW). At 94 to 99 (PEAFFY) the chain is on the extracellular side. The chain crosses the membrane as a helical span at residues 100–117 (GTAAFSVAHLFYLGAFGL). The Cytoplasmic portion of the chain corresponds to 118-123 (TPLQPG). The helical transmembrane segment at 124 to 140 (LLLCTTLASLTYYSFLL) threads the bilayer. The Extracellular portion of the chain corresponds to 141 to 146 (LHLEQG). The helical transmembrane segment at 147 to 163 (MVLPVMAYGLILNSMLW) threads the bilayer. Topologically, residues 164-171 (RSLVWGGS) are cytoplasmic. Residues 172–188 (ASWGAVLFTFSDGVLAW) traverse the membrane as a helical segment. The Extracellular portion of the chain corresponds to 189–199 (DTFVYSLPFAR). Residues 200-218 (LVTMSTYYAAQLLLILSAL) traverse the membrane as a helical segment. Residues 219–226 (RNPGLKTH) are Cytoplasmic-facing.

This sequence belongs to the TMEM86 family. As to quaternary structure, homodimer. Enriched in liver. Also detected in brain and testis.

It localises to the endoplasmic reticulum membrane. The protein resides in the cytoplasm. It carries out the reaction a 1-O-(1Z-alkenyl)-sn-glycero-3-phosphocholine + H2O = a 2,3-saturated aldehyde + sn-glycerol 3-phosphocholine. It catalyses the reaction a 1-O-(1Z-alkenyl)-sn-glycero-3-phosphoethanolamine + H2O = a 2,3-saturated aldehyde + sn-glycero-3-phosphoethanolamine. With respect to regulation, competitively inhibited by lysophosphatidic acid. In terms of biological role, catalyzes the hydrolysis of the vinyl ether bond of choline or ethanolamine lysoplasmalogens, forming fatty aldehyde and glycerophosphocholine or glycerophosphoethanolamine, respectively and is specific for the sn-2-deacylated (lyso) form of plasmalogen. In Mus musculus (Mouse), this protein is Lysoplasmalogenase TMEM86B (Tmem86b).